The following is a 260-amino-acid chain: NAD kinase (260 aa).

Aspartate 49 functions as the Proton acceptor in the catalytic mechanism. NAD(+) is bound by residues 49-50 (DG), 119-120 (NE), aspartate 149, alanine 157, and 160-165 (TAYNLS).

Belongs to the NAD kinase family. It depends on a divalent metal cation as a cofactor.

The protein localises to the cytoplasm. The catalysed reaction is NAD(+) + ATP = ADP + NADP(+) + H(+). Functionally, involved in the regulation of the intracellular balance of NAD and NADP, and is a key enzyme in the biosynthesis of NADP. Catalyzes specifically the phosphorylation on 2'-hydroxyl of the adenosine moiety of NAD to yield NADP. The polypeptide is NAD kinase (Caulobacter vibrioides (strain ATCC 19089 / CIP 103742 / CB 15) (Caulobacter crescentus)).